The following is a 105-amino-acid chain: Met repressor (105 aa).

Belongs to the MetJ family. As to quaternary structure, homodimer.

The protein localises to the cytoplasm. Functionally, this regulatory protein, when combined with SAM (S-adenosylmethionine) represses the expression of the methionine regulon and of enzymes involved in SAM synthesis. This Haemophilus influenzae (strain 86-028NP) protein is Met repressor.